We begin with the raw amino-acid sequence, 100 residues long: MKRREAVCAHRHFLGTGKPPHPLGRSIPVEPCPGLPAFAEVDLLSLLVPIKISSTPPSGSRLDPQIASSAFPGLGSLGGQDSSGSLVQRASCELESPYEL.

Positions 73–100 (GLGSLGGQDSSGSLVQRASCELESPYEL) are disordered.

Expressed in the testis but not in any other non-reproductive tissues (at protein level). Mainly located in spermatogenic cells in seminiferous tubules of adult testis.

It is found in the cytoplasm. This Homo sapiens (Human) protein is Testis development-related protein 1 (TDRG1).